The chain runs to 346 residues: Cell shape-determining protein MreC (346 aa).

Residues 89-118 (NRRLKAELAEMRQWRDRALALQDQNDRFKS) are a coiled coil. Positions 292 to 346 (SLPPVTTEDPQTSILSNPVSRPVAPTPSPATATPSAAPAARPATTATPPQTGAPR) are disordered. Positions 299–308 (EDPQTSILSN) are enriched in polar residues. The span at 309–340 (PVSRPVAPTPSPATATPSAAPAARPATTATPP) shows a compositional bias: low complexity.

Belongs to the MreC family. As to quaternary structure, interacts with penicillin-binding proteins (PBP2, PBP1a, PBP1b, PBP2a and PBP2b). Interacts with outer membrane proteins belonging to the TonB-dependent receptor family of transport proteins.

Its subcellular location is the periplasm. In terms of biological role, involved in formation and maintenance of cell shape. Required for the spatial organization of components of the peptidoglycan-synthesizing holoenzyme in the periplasm and peptidoglycan synthetic activity. The chain is Cell shape-determining protein MreC from Caulobacter vibrioides (strain NA1000 / CB15N) (Caulobacter crescentus).